Reading from the N-terminus, the 335-residue chain is Anthranilate phosphoribosyltransferase (335 aa).

Residues G82, 85-86 (GD), T90, 92-95 (NIST), 110-118 (KHGGRSVSS), and S122 each bind 5-phospho-alpha-D-ribose 1-diphosphate. An anthranilate-binding site is contributed by G82. S94 lines the Mg(2+) pocket. R168 contributes to the anthranilate binding site. Mg(2+)-binding residues include D226 and E227.

Belongs to the anthranilate phosphoribosyltransferase family. Homodimer. The cofactor is Mg(2+).

The enzyme catalyses N-(5-phospho-beta-D-ribosyl)anthranilate + diphosphate = 5-phospho-alpha-D-ribose 1-diphosphate + anthranilate. It participates in amino-acid biosynthesis; L-tryptophan biosynthesis; L-tryptophan from chorismate: step 2/5. Functionally, catalyzes the transfer of the phosphoribosyl group of 5-phosphorylribose-1-pyrophosphate (PRPP) to anthranilate to yield N-(5'-phosphoribosyl)-anthranilate (PRA). The chain is Anthranilate phosphoribosyltransferase from Francisella philomiragia subsp. philomiragia (strain ATCC 25017 / CCUG 19701 / FSC 153 / O#319-036).